The following is a 708-amino-acid chain: Putative adhesion G protein-coupled receptor F2P (708 aa).

At 1–451 the chain is on the extracellular side; that stretch reads MGLTAYGNRR…ESLILTYITY (451 aa). Asn21, Asn220, Asn252, Asn260, Asn305, Asn313, and Asn358 each carry an N-linked (GlcNAc...) asparagine glycan. One can recognise a GAIN-B domain in the interval 293–442; the sequence is MGTTISGDNI…SILMSPHILE (150 aa). Disulfide bonds link Cys394/Cys421 and Cys409/Cys423. A GPS region spans residues 394–442; sequence CVGWHSVENRWDQQACKMIQENSQQAVCKCRPSKLFTSFSILMSPHILE. A helical membrane pass occupies residues 452 to 472; sequence VGLGISICSLILCLSIEVLVW. The Cytoplasmic segment spans residues 473 to 487; the sequence is SQVTKTEITYLRHVC. A helical membrane pass occupies residues 488–508; it reads IVNIAATLLMADVWFIVASFL. Topologically, residues 509–530 are extracellular; it reads SGPITHHKGCVAATFFVHFFYL. Residues 531–551 traverse the membrane as a helical segment; that stretch reads SVFFWMLAKALLILYGIMIVF. Over 552-557 the chain is Cytoplasmic; that stretch reads HTLPKS. A helical transmembrane segment spans residues 558–578; it reads VLVASLFSVGYGCPLAIAAIT. Over 579–606 the chain is Extracellular; that stretch reads VAATEPGKGYLRPEICWLNWDMTKALLA. Residues 607–627 form a helical membrane-spanning segment; the sequence is FVIPALAIVVVNLITVTLVIV. The Cytoplasmic portion of the chain corresponds to 628–650; the sequence is KTQRAAIGNSMFQEVRAIVRISK. Residues 651 to 671 traverse the membrane as a helical segment; that stretch reads NIAILTPLLGLTWGFGVATVI. At 672 to 674 the chain is on the extracellular side; it reads DDR. The helical transmembrane segment at 675-695 threads the bilayer; it reads SLAFHIIFSLLNAFQVSPDAS. At 696-708 the chain is on the cytoplasmic side; sequence DQVQSERIHEDVL.

It belongs to the G-protein coupled receptor 2 family. Adhesion G-protein coupled receptor (ADGR) subfamily. As to expression, high expression in kidney. Up-regulated in lung adenocarcinomas and prostate cancers.

Its subcellular location is the membrane. Its function is as follows. Orphan receptor. This is Putative adhesion G protein-coupled receptor F2P from Homo sapiens (Human).